The primary structure comprises 278 residues: Cytoplasmic envelopment protein 1 (278 aa).

The protein belongs to the herpesviridae cytoplasmic envelopment protein 1 family. Interacts with BSRF1 tegument protein; the BBRF2-BSRF1 complexes oligomerize and might play a role in tethering the viral nucleocapsids to the host Golgi membrane during secondary envelopment.

It localises to the virion. It is found in the virion tegument. The protein resides in the host cytoplasm. Its subcellular location is the host Golgi apparatus. Its function is as follows. Plays a critical role in cytoplasmic virus egress. Participates in the final step of tegumentation and envelope acquisition within the host cytoplasm. This is Cytoplasmic envelopment protein 1 from Homo sapiens (Human).